The primary structure comprises 387 residues: Dual specificity mitogen-activated protein kinase kinase mek-2 (387 aa).

The disordered stretch occupies residues Met-1–Pro-37. Residues Pro-16–Gly-25 are compositionally biased toward polar residues. Residues Glu-26 to Thr-35 are compositionally biased toward low complexity. In terms of domain architecture, Protein kinase spans Leu-73 to Phe-360. Residues Leu-79 to Val-87 and Lys-102 contribute to the ATP site. Asp-195 functions as the Proton acceptor in the catalytic mechanism. A phosphoserine mark is found at Ser-223 and Ser-227.

Belongs to the protein kinase superfamily. STE Ser/Thr protein kinase family. MAP kinase kinase subfamily. In terms of assembly, interacts with ksr-1.

It carries out the reaction L-seryl-[protein] + ATP = O-phospho-L-seryl-[protein] + ADP + H(+). The enzyme catalyses L-threonyl-[protein] + ATP = O-phospho-L-threonyl-[protein] + ADP + H(+). The catalysed reaction is L-tyrosyl-[protein] + ATP = O-phospho-L-tyrosyl-[protein] + ADP + H(+). Its activity is regulated as follows. Activated by tyrosine and threonine phosphorylation catalyzed by MAP kinase kinase kinases. Functionally, functions in the let-60 Ras signaling pathway; acts downstream of lin-45 raf kinase, but before the sur-1/mpk-1 gene product in controlling vulval cell differentiation. Required for progression of developing oocytes through the pachytene stage. Plays a role in responses to M.nematophilum-mediated bacterial infection by promoting tail swelling and preventing constipation. Involved in fluid homeostasis. Positively regulates lifespan upstream of mpk-1. This is Dual specificity mitogen-activated protein kinase kinase mek-2 (mek-2) from Caenorhabditis elegans.